We begin with the raw amino-acid sequence, 529 residues long: Bifunctional purine biosynthesis protein PurH (529 aa).

The region spanning 1–148 is the MGS-like domain; that stretch reads MQQRRPIRRA…KNHKDVAIVV (148 aa).

It belongs to the PurH family.

It carries out the reaction (6R)-10-formyltetrahydrofolate + 5-amino-1-(5-phospho-beta-D-ribosyl)imidazole-4-carboxamide = 5-formamido-1-(5-phospho-D-ribosyl)imidazole-4-carboxamide + (6S)-5,6,7,8-tetrahydrofolate. It catalyses the reaction IMP + H2O = 5-formamido-1-(5-phospho-D-ribosyl)imidazole-4-carboxamide. It participates in purine metabolism; IMP biosynthesis via de novo pathway; 5-formamido-1-(5-phospho-D-ribosyl)imidazole-4-carboxamide from 5-amino-1-(5-phospho-D-ribosyl)imidazole-4-carboxamide (10-formyl THF route): step 1/1. Its pathway is purine metabolism; IMP biosynthesis via de novo pathway; IMP from 5-formamido-1-(5-phospho-D-ribosyl)imidazole-4-carboxamide: step 1/1. The polypeptide is Bifunctional purine biosynthesis protein PurH (Yersinia pseudotuberculosis serotype O:1b (strain IP 31758)).